The chain runs to 345 residues: 4-hydroxy-2-oxovalerate aldolase 1 (345 aa).

Residues 9–261 (IRVTDTSLRD…RTGIDFFAIA (253 aa)) form the Pyruvate carboxyltransferase domain. 17-18 (RD) provides a ligand contact to substrate. A Mn(2+)-binding site is contributed by D18. Residue H21 is the Proton acceptor of the active site. S171 and H200 together coordinate substrate. H200 and H202 together coordinate Mn(2+). Residue Y291 participates in substrate binding.

It belongs to the 4-hydroxy-2-oxovalerate aldolase family.

It catalyses the reaction (S)-4-hydroxy-2-oxopentanoate = acetaldehyde + pyruvate. The sequence is that of 4-hydroxy-2-oxovalerate aldolase 1 from Nocardia farcinica (strain IFM 10152).